Here is a 154-residue protein sequence, read N- to C-terminus: Cytochrome c-type biogenesis protein CcmE (154 aa).

Residues 1 to 8 (MHPQRKQR) lie on the Cytoplasmic side of the membrane. Residues 9–29 (LMIVLFIVVFSSLAVGLIAYA) form a helical; Signal-anchor for type II membrane protein membrane-spanning segment. Residues 30–154 (LRENINLFYP…ATCGGLNYGA (125 aa)) lie on the Periplasmic side of the membrane. 2 residues coordinate heme: His124 and Tyr128.

This sequence belongs to the CcmE/CycJ family.

The protein localises to the cell inner membrane. Its function is as follows. Heme chaperone required for the biogenesis of c-type cytochromes. Transiently binds heme delivered by CcmC and transfers the heme to apo-cytochromes in a process facilitated by CcmF and CcmH. This chain is Cytochrome c-type biogenesis protein CcmE, found in Cellvibrio japonicus (strain Ueda107) (Pseudomonas fluorescens subsp. cellulosa).